Here is a 210-residue protein sequence, read N- to C-terminus: Redox-sensing transcriptional repressor Rex (210 aa).

The segment at residues I16–F55 is a DNA-binding region (H-T-H motif). An NAD(+)-binding site is contributed by G90–G95.

It belongs to the transcriptional regulatory Rex family. In terms of assembly, homodimer.

The protein localises to the cytoplasm. Modulates transcription in response to changes in cellular NADH/NAD(+) redox state. The sequence is that of Redox-sensing transcriptional repressor Rex from Syntrophomonas wolfei subsp. wolfei (strain DSM 2245B / Goettingen).